We begin with the raw amino-acid sequence, 374 residues long: C-X-C chemokine receptor type 5 (374 aa).

Topologically, residues 1–57 (MNYPLTLDMGSITYNMDDLYKELAFYSNSTEIPLQDSNFCSTVEGPLLTSFKAVFMP) are extracellular. Asparagine 28 is a glycosylation site (N-linked (GlcNAc...) asparagine). A helical membrane pass occupies residues 58 to 78 (VAYSLIFLLGMMGNILVLVIL). The Cytoplasmic segment spans residues 79 to 90 (ERHRHTRSSTET). A helical membrane pass occupies residues 91–111 (FLFHLAVADLLLVFILPFAVA). The Extracellular portion of the chain corresponds to 112–126 (EGSVGWVLGTFLCKT). Cysteine 124 and cysteine 204 form a disulfide bridge. A helical transmembrane segment spans residues 127–147 (VIALHKINFYCSSLLLACIAV). Over 148–169 (DRYLAIVHAVHAYRRRRLLSIH) the chain is Cytoplasmic. Residues 170–190 (ITCTAIWLAGFLFALPELLFA) form a helical membrane-spanning segment. Residues 191-221 (KVGQPHNNDSLPQCTFSQENEAETRAWFTSR) are Extracellular-facing. Asparagine 198 carries an N-linked (GlcNAc...) asparagine glycan. The helical transmembrane segment at 222–242 (FLYHIGGFLLPMLVMGWCYVG) threads the bilayer. The Cytoplasmic segment spans residues 243-261 (VVHRLLQAQRRPQRQKAVR). Residues 262 to 282 (VAILVTSIFFLCWSPYHIVIF) traverse the membrane as a helical segment. Residues 283–306 (LDTLERLKAVNSSCELSGYLSVAI) lie on the Extracellular side of the membrane. The chain crosses the membrane as a helical span at residues 307 to 327 (TLCEFLGLAHCCLNPMLYTFA). Residues 328 to 374 (GVKFRSDLSRLLTKLGCAGPASLCQLFPNWRKSSLSESENATSLTTF) are Cytoplasmic-facing.

The protein belongs to the G-protein coupled receptor 1 family. In terms of tissue distribution, mainly in spleen, in resting B-cells.

It localises to the cell membrane. Functionally, cytokine receptor that binds to B-lymphocyte chemoattractant (BLC). Involved in B-cell migration into B-cell follicles of spleen and Peyer patches but not into those of mesenteric or peripheral lymph nodes. This is C-X-C chemokine receptor type 5 (Cxcr5) from Mus musculus (Mouse).